The sequence spans 535 residues: Sodium channel protein Nach (535 aa).

Topologically, residues 1-49 (MGHQEELKPEQVDLKVTPFVGYLRRTWSDFCATSSIHGLKYTRDEDTNK) are cytoplasmic. A helical membrane pass occupies residues 50-70 (IVHLVWLLISVVMFICAVVMA). The Extracellular portion of the chain corresponds to 71 to 471 (RTFYMDYRSS…LVSNLGSAFS (401 aa)). Residues Asn-165, Asn-239, and Asn-367 are each glycosylated (N-linked (GlcNAc...) asparagine). A helical membrane pass occupies residues 472–492 (LFVGMSMLSVVEIIYYFSVIL). The Cytoplasmic portion of the chain corresponds to 493 to 535 (RKNYKLECETRSQMLHKKPKFAWPKANDTHSKEQKSVFIIHKS).

The protein belongs to the amiloride-sensitive sodium channel (TC 1.A.6) family. As to expression, embryonic and larval tracheal system; dorsal trunk (but not at fusion with transverse connective), several branches and terminal cells. Also expressed in adult tracheal system; dorsal trunk, but not at the spiracles.

The protein resides in the membrane. Functionally, part of a complex that plays a role in tracheal liquid clearance. Probable role in sodium transport. The protein is Sodium channel protein Nach (Nach) of Drosophila melanogaster (Fruit fly).